Reading from the N-terminus, the 366-residue chain is 3-dehydroquinate synthase (366 aa).

Residues 69-74, 103-107, 127-128, K140, and K149 contribute to the NAD(+) site; these read DGEAFK, GVIGD, and TT. 3 residues coordinate Zn(2+): E182, H245, and H262.

The protein belongs to the sugar phosphate cyclases superfamily. Dehydroquinate synthase family. It depends on Co(2+) as a cofactor. Requires Zn(2+) as cofactor. NAD(+) serves as cofactor.

It localises to the cytoplasm. It carries out the reaction 7-phospho-2-dehydro-3-deoxy-D-arabino-heptonate = 3-dehydroquinate + phosphate. It participates in metabolic intermediate biosynthesis; chorismate biosynthesis; chorismate from D-erythrose 4-phosphate and phosphoenolpyruvate: step 2/7. Catalyzes the conversion of 3-deoxy-D-arabino-heptulosonate 7-phosphate (DAHP) to dehydroquinate (DHQ). In Pseudomonas fluorescens (strain Pf0-1), this protein is 3-dehydroquinate synthase.